Reading from the N-terminus, the 95-residue chain is Protein TusB (95 aa).

It belongs to the DsrH/TusB family. As to quaternary structure, heterohexamer, formed by a dimer of trimers. The hexameric TusBCD complex contains 2 copies each of TusB, TusC and TusD. The TusBCD complex interacts with TusE.

The protein resides in the cytoplasm. Its function is as follows. Part of a sulfur-relay system required for 2-thiolation of 5-methylaminomethyl-2-thiouridine (mnm(5)s(2)U) at tRNA wobble positions. This Escherichia coli (strain K12 / MC4100 / BW2952) protein is Protein TusB.